The primary structure comprises 150 residues: Large ribosomal subunit protein bL9 (150 aa).

It belongs to the bacterial ribosomal protein bL9 family.

Binds to the 23S rRNA. The chain is Large ribosomal subunit protein bL9 from Yersinia pseudotuberculosis serotype I (strain IP32953).